The sequence spans 110 residues: MNLQKISKKIDFKKGAGLIPTIIQDFCSGEVLMLAYMNKESLEKTIETNTTWFWSRSREELWNKGATSGHFQYVKSIHIDCDGDTLLIKVEQLGPACHTGNRSCFYTTLI.

Residue D80 participates in Mg(2+) binding. C81 is a Zn(2+) binding site. Residues D82 and D84 each coordinate Mg(2+). C97 and C104 together coordinate Zn(2+).

Belongs to the PRA-CH family. As to quaternary structure, homodimer. It depends on Mg(2+) as a cofactor. Requires Zn(2+) as cofactor.

The protein resides in the cytoplasm. It carries out the reaction 1-(5-phospho-beta-D-ribosyl)-5'-AMP + H2O = 1-(5-phospho-beta-D-ribosyl)-5-[(5-phospho-beta-D-ribosylamino)methylideneamino]imidazole-4-carboxamide. It participates in amino-acid biosynthesis; L-histidine biosynthesis; L-histidine from 5-phospho-alpha-D-ribose 1-diphosphate: step 3/9. In terms of biological role, catalyzes the hydrolysis of the adenine ring of phosphoribosyl-AMP. This is Phosphoribosyl-AMP cyclohydrolase from Clostridium botulinum (strain ATCC 19397 / Type A).